We begin with the raw amino-acid sequence, 606 residues long: NADH-ubiquinone oxidoreductase chain 5 (606 aa).

16 helical membrane-spanning segments follow: residues 1–21 (MNLF…PIIM), 43–63 (AFII…EAII), 88–108 (IFIP…MWYM), 117–137 (FFKY…ANNL), 140–160 (LFIG…WWYG), 171–191 (AILY…WFLT), 209–229 (LNIP…QFGL), 241–261 (TPVS…FLLI), 273–293 (MQTL…ICAL), 310–330 (LGLM…LHIC), 366–386 (MPFT…MPFL), 413–433 (LIAT…VLLG), 457–477 (LLIG…PTTI), 488–508 (LTAL…NLAA), 513–533 (FMYP…PIVM), and 582–602 (GLVK…LILL).

This sequence belongs to the complex I subunit 5 family. Core subunit of respiratory chain NADH dehydrogenase (Complex I) which is composed of 45 different subunits.

Its subcellular location is the mitochondrion inner membrane. It carries out the reaction a ubiquinone + NADH + 5 H(+)(in) = a ubiquinol + NAD(+) + 4 H(+)(out). Core subunit of the mitochondrial membrane respiratory chain NADH dehydrogenase (Complex I) which catalyzes electron transfer from NADH through the respiratory chain, using ubiquinone as an electron acceptor. Essential for the catalytic activity and assembly of complex I. The polypeptide is NADH-ubiquinone oxidoreductase chain 5 (MT-ND5) (Felis catus (Cat)).